Consider the following 412-residue polypeptide: Protein arginine N-methyltransferase 2 (412 aa).

A compositionally biased stretch (basic and acidic residues) spans 48–65 (EKNRNGDKEFRESTDDNK). Disordered stretches follow at residues 48-69 (EKNR…TSNT) and 169-189 (SVQT…DDAT). Phosphoserine occurs at positions 181 and 184. The RMT2 domain occupies 189–412 (TAANQQVYLK…YYYHPRITFA (224 aa)). Residues tyrosine 196, methionine 226, 250–255 (FGMGII), 271–273 (EAH), 298–299 (WQ), and aspartate 319 each bind S-adenosyl-L-methionine.

Belongs to the class I-like SAM-binding methyltransferase superfamily. RMT2 methyltransferase family. As to quaternary structure, monomer. Interacts with nucleoporins NUP49, NUP57 and NUP100.

The protein resides in the cytoplasm. The protein localises to the nucleus. S-adenosyl-L-methionine-dependent protein-arginine N-methyltransferase that methylates the delta-nitrogen atom of arginine residues to form N5-methylarginine (type IV) in target proteins. Monomethylates ribosomal protein L12 (RPL12A/RPL12B) at 'Arg-67'. The chain is Protein arginine N-methyltransferase 2 from Saccharomyces cerevisiae (strain ATCC 204508 / S288c) (Baker's yeast).